A 476-amino-acid polypeptide reads, in one-letter code: Scopoletin glucosyltransferase (476 aa).

The active-site Proton acceptor is the His-16. His-16 provides a ligand contact to an anthocyanidin. Residue Asp-119 is the Charge relay of the active site. Positions 343, 345, 360, 363, 364, 365, and 368 each coordinate UDP-alpha-D-glucose. Ala-383 contributes to the an anthocyanidin binding site. UDP-alpha-D-glucose contacts are provided by Glu-384 and Gln-385.

Belongs to the UDP-glycosyltransferase family.

It catalyses the reaction scopoletin + UDP-alpha-D-glucose = scopolin + UDP + H(+). In terms of biological role, glucosyltransferase acting preferentially on aromatic substrates of the phenylpropanoid types. The best substrates are scopoletin and esculetin. Required for full resistance to virus. This is Scopoletin glucosyltransferase (TOGT1) from Nicotiana tabacum (Common tobacco).